The sequence spans 179 residues: Large ribosomal subunit protein uL5 (179 aa).

This sequence belongs to the universal ribosomal protein uL5 family. As to quaternary structure, part of the 50S ribosomal subunit; part of the 5S rRNA/L5/L18/L25 subcomplex. Contacts the 5S rRNA and the P site tRNA. Forms a bridge to the 30S subunit in the 70S ribosome.

Its function is as follows. This is one of the proteins that bind and probably mediate the attachment of the 5S RNA into the large ribosomal subunit, where it forms part of the central protuberance. In the 70S ribosome it contacts protein S13 of the 30S subunit (bridge B1b), connecting the 2 subunits; this bridge is implicated in subunit movement. Contacts the P site tRNA; the 5S rRNA and some of its associated proteins might help stabilize positioning of ribosome-bound tRNAs. The protein is Large ribosomal subunit protein uL5 of Pseudomonas fluorescens (strain ATCC BAA-477 / NRRL B-23932 / Pf-5).